We begin with the raw amino-acid sequence, 659 residues long: Interferon-induced GTP-binding protein Mx1 (659 aa).

M1 is subject to N-acetylmethionine. The disordered stretch occupies residues 1 to 40 (MVNSKGEITDSDPGSNHLLLNGLPDKAGKNQDTEPENSLC). In terms of domain architecture, Dynamin-type G spans 65–338 (DLALPAIAVI…LITHICKTLP (274 aa)). Positions 75-82 (GDQSSGKS) are G1 motif. Residue 75–82 (GDQSSGKS) participates in GTP binding. Residues 100-102 (VTR) are G2 motif. The G3 motif stretch occupies residues 176–179 (DLPG). Residues 176–180 (DLPGI) and 245–248 (TKPD) each bind GTP. The tract at residues 245-248 (TKPD) is G4 motif. Positions 277–280 (KCRG) are G5 motif. The bundle signaling element (BSE) stretch occupies residues 339–364 (LLENQIKENHEKITEELKKYGSDVPE). Positions 364 to 531 (EEEHEKMFFL…HFQMEQIVYC (168 aa)) are middle domain. The segment at 365–629 (EEHEKMFFLI…KDTYNWLLKE (265 aa)) is stalk. The segment at 552–555 (KNKK) is critical for lipid-binding. In terms of domain architecture, GED spans 571–659 (LSEIFEHLLA…ARRRLAKFPG (89 aa)).

This sequence belongs to the TRAFAC class dynamin-like GTPase superfamily. Dynamin/Fzo/YdjA family. As to quaternary structure, homooligomer. Oligomerizes into multimeric filamentous or ring-like structures by virtue of its stalk domain. Oligomerization is critical for GTPase activity, protein stability, and recognition of viral target structures. Interacts with TRPC1, TRPC3, TRPC4, TRPC5, TRPC6 and TRPC7. Interacts with HSPA5. Interacts with TUBB/TUBB5. Interacts with DDX39A and DDX39B. In terms of processing, ISGylated.

Its subcellular location is the cytoplasm. It is found in the endoplasmic reticulum membrane. The protein resides in the perinuclear region. Interferon-induced dynamin-like GTPase with antiviral activity. The protein is Interferon-induced GTP-binding protein Mx1 (MX1) of Phoca vitulina (Harbor seal).